Here is a 455-residue protein sequence, read N- to C-terminus: Phosphoglucosamine mutase (455 aa).

S102 serves as the catalytic Phosphoserine intermediate. Residues S102, D241, D243, and D245 each coordinate Mg(2+). S102 carries the post-translational modification Phosphoserine.

The protein belongs to the phosphohexose mutase family. Requires Mg(2+) as cofactor. In terms of processing, activated by phosphorylation.

The catalysed reaction is alpha-D-glucosamine 1-phosphate = D-glucosamine 6-phosphate. In terms of biological role, catalyzes the conversion of glucosamine-6-phosphate to glucosamine-1-phosphate. In Legionella pneumophila (strain Lens), this protein is Phosphoglucosamine mutase.